We begin with the raw amino-acid sequence, 198 residues long: Guanylate kinase (198 aa).

The residue at position 2 (Gly2) is an N-acetylglycine. The Guanylate kinase-like domain maps to 4–186 (PRPVVLSGPS…AYWALKEALS (183 aa)). 14–19 (GAGKST) is a binding site for ATP. A substrate-binding site is contributed by 37-51 (SHTTRDPRPGEENGK). Residues Arg44, Arg137, and Arg148 contribute to the active site. ATP is bound at residue 171 to 172 (ND).

This sequence belongs to the guanylate kinase family. In terms of assembly, monomer. Interacts with RD3.

It localises to the photoreceptor inner segment. Its subcellular location is the cytoplasm. It is found in the cytosol. It carries out the reaction GMP + ATP = GDP + ADP. Up-regulated by RD3. Its function is as follows. Catalyzes the phosphorylation of GMP to GDP. Essential enzyme for recycling GMP and indirectly, cyclic GMP (cGMP). Involved in the cGMP metabolism in photoreceptors. The chain is Guanylate kinase (GUK1) from Sus scrofa (Pig).